The primary structure comprises 198 residues: Acyl carrier protein phosphodiesterase (198 aa).

Belongs to the AcpH family.

It carries out the reaction holo-[ACP] + H2O = apo-[ACP] + (R)-4'-phosphopantetheine + H(+). Its function is as follows. Converts holo-ACP to apo-ACP by hydrolytic cleavage of the phosphopantetheine prosthetic group from ACP. The chain is Acyl carrier protein phosphodiesterase from Photorhabdus laumondii subsp. laumondii (strain DSM 15139 / CIP 105565 / TT01) (Photorhabdus luminescens subsp. laumondii).